Here is a 536-residue protein sequence, read N- to C-terminus: Probable pectinesterase/pectinesterase inhibitor 59 (536 aa).

Residues 1-30 form the signal peptide; that stretch reads MNMMMQKLSILFLHLILLVLLCVHPLTTVA. Positions 31 to 183 are pectinesterase inhibitor 59; sequence DRNSTDWCDK…SHLISNCLAV (153 aa). Residues N33, N91, N116, N159, and N195 are each glycosylated (N-linked (GlcNAc...) asparagine). Residues 221–522 are pectinesterase 59; the sequence is NLVVAKDGSG…FTVGKFIAGT (302 aa). Substrate is bound by residues T298 and Q328. D351 acts as the Proton donor; for pectinesterase activity in catalysis. Residues C365 and C385 are joined by a disulfide bond. D372 (nucleophile; for pectinesterase activity) is an active-site residue. R440 and W442 together coordinate substrate.

The protein in the N-terminal section; belongs to the PMEI family. In the C-terminal section; belongs to the pectinesterase family. As to expression, expressed in siliques.

The protein resides in the secreted. The protein localises to the cell wall. It catalyses the reaction [(1-&gt;4)-alpha-D-galacturonosyl methyl ester](n) + n H2O = [(1-&gt;4)-alpha-D-galacturonosyl](n) + n methanol + n H(+). Its pathway is glycan metabolism; pectin degradation; 2-dehydro-3-deoxy-D-gluconate from pectin: step 1/5. Its function is as follows. Acts in the modification of cell walls via demethylesterification of cell wall pectin. The polypeptide is Probable pectinesterase/pectinesterase inhibitor 59 (PME59) (Arabidopsis thaliana (Mouse-ear cress)).